A 294-amino-acid polypeptide reads, in one-letter code: Mimecan (294 aa).

The N-terminal stretch at 1–19 (MKTLQAAFFLVAFVPLVKP) is a signal peptide. N-linked (GlcNAc...) asparagine glycosylation is present at N61. 7 LRR repeats span residues 108 to 127 (EAVP…FNKI), 128 to 151 (KRIA…GNMI), 152 to 175 (EEIE…ENRL), 176 to 195 (VKLP…QNRI), 196 to 221 (KSRG…HNAL), 222 to 242 (ESVP…HNNI), and 243 to 273 (TTIN…GNPI). N-linked (GlcNAc...) asparagine glycans are attached at residues N241 and N254. C251 and C284 form a disulfide bridge.

Belongs to the small leucine-rich proteoglycan (SLRP) family. SLRP class III subfamily. In terms of processing, the composition of the N-linked chains or the substitution of the N-linked sites is different between embryonic and adult tissues. Contains keratan sulfate.

The protein resides in the secreted. It is found in the extracellular space. Its subcellular location is the extracellular matrix. Its function is as follows. Induces bone formation in conjunction with TGF-beta-1 or TGF-beta-2. The protein is Mimecan (OGN) of Gallus gallus (Chicken).